The primary structure comprises 382 residues: L-arabinitol 4-dehydrogenase (382 aa).

Zn(2+) contacts are provided by Cys55, His80, Glu81, Cys110, Cys113, Cys116, Cys124, and Glu165. NAD(+) contacts are provided by residues 192–193, Asp213, Arg218, Ile293, and 317–319; these read PI and QYR.

This sequence belongs to the zinc-containing alcohol dehydrogenase family. Homotetramer. Zn(2+) is required as a cofactor.

The catalysed reaction is L-arabinitol + NAD(+) = L-xylulose + NADH + H(+). It participates in carbohydrate degradation; L-arabinose degradation via L-arabinitol; D-xylulose 5-phosphate from L-arabinose (fungal route): step 2/5. Catalyzes the NAD-dependent oxidation of L-arabinitol to L-xylulose in the fungal L-arabinose catabolic pathway. L-arabinose catabolism is important for using plant material as a carbon source. Also active on ribitol and xylitol. Not active with NADP as cosubstrate. The chain is L-arabinitol 4-dehydrogenase (ladA) from Aspergillus oryzae (Yellow koji mold).